The following is a 301-amino-acid chain: NAD kinase 2 (301 aa).

Residue Asp-77 is the Proton acceptor of the active site. Residues Asp-77 to Gly-78, Arg-82, Asn-151 to Glu-152, Lys-162, Asp-181, and Thr-192 to Ser-197 contribute to the NAD(+) site.

This sequence belongs to the NAD kinase family. A divalent metal cation serves as cofactor.

It is found in the cytoplasm. The catalysed reaction is NAD(+) + ATP = ADP + NADP(+) + H(+). Involved in the regulation of the intracellular balance of NAD and NADP, and is a key enzyme in the biosynthesis of NADP. Catalyzes specifically the phosphorylation on 2'-hydroxyl of the adenosine moiety of NAD to yield NADP. This chain is NAD kinase 2, found in Streptomyces coelicolor (strain ATCC BAA-471 / A3(2) / M145).